A 592-amino-acid polypeptide reads, in one-letter code: Putative RING finger protein ORF9 (592 aa).

The RING-type zinc finger occupies Cys-12–Arg-49. Residues Trp-414 to Leu-441 adopt a coiled-coil conformation.

The polypeptide is Putative RING finger protein ORF9 (Ostreid herpesvirus 1 (isolate France) (OsHV-1)).